Reading from the N-terminus, the 270-residue chain is Tryptophan synthase alpha chain (270 aa).

Residues Glu51 and Asp62 each act as proton acceptor in the active site.

It belongs to the TrpA family. As to quaternary structure, tetramer of two alpha and two beta chains.

It carries out the reaction (1S,2R)-1-C-(indol-3-yl)glycerol 3-phosphate + L-serine = D-glyceraldehyde 3-phosphate + L-tryptophan + H2O. Its pathway is amino-acid biosynthesis; L-tryptophan biosynthesis; L-tryptophan from chorismate: step 5/5. Its function is as follows. The alpha subunit is responsible for the aldol cleavage of indoleglycerol phosphate to indole and glyceraldehyde 3-phosphate. The chain is Tryptophan synthase alpha chain from Methanothermobacter thermautotrophicus (strain ATCC 29096 / DSM 1053 / JCM 10044 / NBRC 100330 / Delta H) (Methanobacterium thermoautotrophicum).